A 283-amino-acid chain; its full sequence is CASP-like protein 4A3 (283 aa).

The interval 1–86 (MRSPAKTMPS…VEETPSPIVV (86 aa)) is disordered. The Cytoplasmic portion of the chain corresponds to 1 to 135 (MRSPAKTMPS…SRREEVVKFS (135 aa)). A compositionally biased stretch (low complexity) spans 9–20 (PSMSPSSVSTEK). Positions 50 to 79 (SLDHSSESEKEDAKSKPESRRNKNPGKVEE) are enriched in basic and acidic residues. The chain crosses the membrane as a helical span at residues 136–156 (ALGFRLSEVVLALISFSIMAA). Residues 157-174 (DKTKGWSGDSFDRYKEYR) are Extracellular-facing. The chain crosses the membrane as a helical span at residues 175–195 (FCLSVNVVAFVYSSFQACDLA). Residues 196 to 212 (YHLVKEKHLISHHLRPL) are Cytoplasmic-facing. Residues 213–233 (FEFIIDQVLAYLLMSASTAAV) form a helical membrane-spanning segment. Topologically, residues 234-251 (TRVDDWVSNWGKDEFTEM) are extracellular. Residues 252 to 272 (ASASIAMSFLAFLAFAFSSLI) traverse the membrane as a helical segment. Over 273-283 (SGYNLFNQGSL) the chain is Cytoplasmic.

The protein belongs to the Casparian strip membrane proteins (CASP) family. In terms of assembly, homodimer and heterodimers.

It localises to the cell membrane. The protein is CASP-like protein 4A3 of Arabidopsis thaliana (Mouse-ear cress).